Here is a 141-residue protein sequence, read N- to C-terminus: 3-hydroxyacyl-[acyl-carrier-protein] dehydratase FabZ (141 aa).

H48 is a catalytic residue.

This sequence belongs to the thioester dehydratase family. FabZ subfamily.

Its subcellular location is the cytoplasm. It catalyses the reaction a (3R)-hydroxyacyl-[ACP] = a (2E)-enoyl-[ACP] + H2O. Its function is as follows. Involved in unsaturated fatty acids biosynthesis. Catalyzes the dehydration of short chain beta-hydroxyacyl-ACPs and long chain saturated and unsaturated beta-hydroxyacyl-ACPs. The chain is 3-hydroxyacyl-[acyl-carrier-protein] dehydratase FabZ from Herpetosiphon aurantiacus (strain ATCC 23779 / DSM 785 / 114-95).